A 1133-amino-acid polypeptide reads, in one-letter code: ATP-dependent DNA helicase homolog MER3 (1133 aa).

Residues 34-229 (PLCFHSDINM…WLKVPTAGIK (196 aa)) enclose the Helicase ATP-binding domain. 47–54 (APTGSGKT) is a binding site for ATP. Positions 165–168 (DEVH) match the DEVH box motif. Residues 263–460 (YIYDILMQYS…CLIEHLTAEI (198 aa)) form the Helicase C-terminal domain. Residues 536 to 847 (EPGRLMTKYY…FEEYIGIDLH (312 aa)) enclose the SEC63 domain. Residues 878-919 (ACIADDDNPVTSGPSNRKDKKDDMPSFKLIDDDSEEEKEPYV) form a disordered region. The segment covering 893–908 (NRKDKKDDMPSFKLID) has biased composition (basic and acidic residues). A compositionally biased stretch (acidic residues) spans 909-919 (DDSEEEKEPYV).

It belongs to the helicase family. SKI2 subfamily. Expressed in meiocytes during meiosis.

It is found in the nucleus. It catalyses the reaction Couples ATP hydrolysis with the unwinding of duplex DNA by translocating in the 3'-5' direction.. The enzyme catalyses ATP + H2O = ADP + phosphate + H(+). In terms of biological role, DNA helicase required for crossover formation, complete synapsis of homologous chromosomes and bivalent formation during meiosis. Is specific to recombination events resulting in interference-sensitive crossovers (class I meiotic crossover). In Arabidopsis thaliana (Mouse-ear cress), this protein is ATP-dependent DNA helicase homolog MER3.